Consider the following 252-residue polypeptide: Ribosomal RNA small subunit methyltransferase J (252 aa).

Residues 101-102, 117-118, 153-154, and Asp-171 each bind S-adenosyl-L-methionine; these read RD, ER, and SS.

Belongs to the methyltransferase superfamily. RsmJ family.

It localises to the cytoplasm. The enzyme catalyses guanosine(1516) in 16S rRNA + S-adenosyl-L-methionine = N(2)-methylguanosine(1516) in 16S rRNA + S-adenosyl-L-homocysteine + H(+). Its function is as follows. Specifically methylates the guanosine in position 1516 of 16S rRNA. This Salmonella paratyphi B (strain ATCC BAA-1250 / SPB7) protein is Ribosomal RNA small subunit methyltransferase J.